The following is a 484-amino-acid chain: 6-phosphogluconate dehydrogenase, decarboxylating (484 aa).

NADP(+) contacts are provided by residues 10–15 (GLAVMG), 33–35 (NRT), 75–77 (IKA), and asparagine 103. Residues asparagine 103 and 129–131 (SGG) contribute to the substrate site. The active-site Proton acceptor is lysine 183. Residue 186-187 (HN) coordinates substrate. Glutamate 190 functions as the Proton donor in the catalytic mechanism. Positions 191, 260, 287, 448, and 454 each coordinate substrate.

The protein belongs to the 6-phosphogluconate dehydrogenase family. As to quaternary structure, homodimer.

It catalyses the reaction 6-phospho-D-gluconate + NADP(+) = D-ribulose 5-phosphate + CO2 + NADPH. It functions in the pathway carbohydrate degradation; pentose phosphate pathway; D-ribulose 5-phosphate from D-glucose 6-phosphate (oxidative stage): step 3/3. Catalyzes the oxidative decarboxylation of 6-phosphogluconate to ribulose 5-phosphate and CO(2), with concomitant reduction of NADP to NADPH. The chain is 6-phosphogluconate dehydrogenase, decarboxylating from Caenorhabditis elegans.